A 31-amino-acid chain; its full sequence is Cytochrome b6-f complex subunit 6 (31 aa).

A helical transmembrane segment spans residues 4-24 (ITSYFGFLLAALTITSALFIG).

It belongs to the PetL family. As to quaternary structure, the 4 large subunits of the cytochrome b6-f complex are cytochrome b6, subunit IV (17 kDa polypeptide, PetD), cytochrome f and the Rieske protein, while the 4 small subunits are PetG, PetL, PetM and PetN. The complex functions as a dimer.

The protein localises to the plastid. It is found in the chloroplast thylakoid membrane. Its function is as follows. Component of the cytochrome b6-f complex, which mediates electron transfer between photosystem II (PSII) and photosystem I (PSI), cyclic electron flow around PSI, and state transitions. PetL is important for photoautotrophic growth as well as for electron transfer efficiency and stability of the cytochrome b6-f complex. This is Cytochrome b6-f complex subunit 6 from Solanum tuberosum (Potato).